Consider the following 273-residue polypeptide: Undecaprenyl-diphosphatase (273 aa).

7 consecutive transmembrane segments (helical) span residues Ala45 to Trp65, Leu90 to His110, Leu116 to Ala136, Tyr154 to Ser173, Tyr190 to Leu210, Ala222 to Ile242, and Ile252 to Phe272.

The protein belongs to the UppP family.

It localises to the cell inner membrane. The enzyme catalyses di-trans,octa-cis-undecaprenyl diphosphate + H2O = di-trans,octa-cis-undecaprenyl phosphate + phosphate + H(+). In terms of biological role, catalyzes the dephosphorylation of undecaprenyl diphosphate (UPP). Confers resistance to bacitracin. This is Undecaprenyl-diphosphatase from Enterobacter sp. (strain 638).